Here is a 47-residue protein sequence, read N- to C-terminus: Mu-theraphotoxin-An1a (47 aa).

3 disulfides stabilise this stretch: cysteine 4–cysteine 34, cysteine 8–cysteine 39, and cysteine 22–cysteine 44.

In terms of processing, contains 3 disulfide bonds. In terms of tissue distribution, expressed by the venom gland.

It localises to the secreted. Its function is as follows. Is toxic to insects. Reduces amplitude and frequency of spontaneous firing and inhibits voltage-gated sodium current (Nav) in the dorsal unpaired median (DUM) neurons of P.americana. This is Mu-theraphotoxin-An1a from Acanthoscurria natalensis (Tarantula spider).